Here is a 189-residue protein sequence, read N- to C-terminus: MTMISVNEFKNGLTIQYNNDLWRIVEFQHVKPGKGSAFVRSKLKSLRTGAVQEYTFRSTAKVETADIQTKSMQYLYNDGSSYVFMDTSTYDQLAIPNEQIGDEANYLLENMVVSVITHEGETLGIQLPNTVDLKVAKTEPNIKGDTSSGGGKPATMETGLVVNVPFFINEGDVLTINTSDGTYVSRANK.

It belongs to the elongation factor P family.

It localises to the cytoplasm. Its pathway is protein biosynthesis; polypeptide chain elongation. In terms of biological role, involved in peptide bond synthesis. Stimulates efficient translation and peptide-bond synthesis on native or reconstituted 70S ribosomes in vitro. Probably functions indirectly by altering the affinity of the ribosome for aminoacyl-tRNA, thus increasing their reactivity as acceptors for peptidyl transferase. The sequence is that of Elongation factor P 2 from Lactobacillus acidophilus (strain ATCC 700396 / NCK56 / N2 / NCFM).